The primary structure comprises 348 residues: Phenylalanine--tRNA ligase alpha subunit (348 aa).

Glu262 serves as a coordination point for Mg(2+).

The protein belongs to the class-II aminoacyl-tRNA synthetase family. Phe-tRNA synthetase alpha subunit type 1 subfamily. As to quaternary structure, tetramer of two alpha and two beta subunits. It depends on Mg(2+) as a cofactor.

It is found in the cytoplasm. The catalysed reaction is tRNA(Phe) + L-phenylalanine + ATP = L-phenylalanyl-tRNA(Phe) + AMP + diphosphate + H(+). The polypeptide is Phenylalanine--tRNA ligase alpha subunit (Streptococcus pneumoniae (strain 70585)).